Reading from the N-terminus, the 363-residue chain is Flagellar P-ring protein (363 aa).

An N-terminal signal peptide occupies residues 1 to 20 (MKYRLIVALAMLVLSLPSQA).

This sequence belongs to the FlgI family. In terms of assembly, the basal body constitutes a major portion of the flagellar organelle and consists of four rings (L,P,S, and M) mounted on a central rod.

Its subcellular location is the periplasm. It is found in the bacterial flagellum basal body. In terms of biological role, assembles around the rod to form the L-ring and probably protects the motor/basal body from shearing forces during rotation. This Shewanella sp. (strain ANA-3) protein is Flagellar P-ring protein.